The chain runs to 132 residues: Large ribosomal subunit protein uL24 (132 aa).

It belongs to the universal ribosomal protein uL24 family. In terms of assembly, part of the 50S ribosomal subunit.

In terms of biological role, one of two assembly initiator proteins, it binds directly to the 5'-end of the 23S rRNA, where it nucleates assembly of the 50S subunit. Located at the polypeptide exit tunnel on the outside of the subunit. The protein is Large ribosomal subunit protein uL24 of Aeropyrum pernix (strain ATCC 700893 / DSM 11879 / JCM 9820 / NBRC 100138 / K1).